Reading from the N-terminus, the 236-residue chain is Small ribosomal subunit protein uS2c (236 aa).

The protein belongs to the universal ribosomal protein uS2 family.

Its subcellular location is the plastid. The protein resides in the chloroplast. The protein is Small ribosomal subunit protein uS2c (rps2) of Nicotiana tabacum (Common tobacco).